Consider the following 561-residue polypeptide: Arginine--tRNA ligase (561 aa).

The short motif at 129–139 (ANPTGPLHVGH) is the 'HIGH' region element.

The protein belongs to the class-I aminoacyl-tRNA synthetase family. Monomer.

It localises to the cytoplasm. It carries out the reaction tRNA(Arg) + L-arginine + ATP = L-arginyl-tRNA(Arg) + AMP + diphosphate. This chain is Arginine--tRNA ligase, found in Bordetella petrii (strain ATCC BAA-461 / DSM 12804 / CCUG 43448).